The chain runs to 157 residues: Protein E6 (157 aa).

2 zinc fingers span residues 41-77 and 114-150; these read CNFC…CRVC and CQTC…CRQC.

It belongs to the papillomaviridae E6 protein family. Forms homodimers. Interacts with ubiquitin-protein ligase UBE3A/E6-AP; this interaction stimulates UBE3A ubiquitin activity. Interacts with host BAK1.

Its subcellular location is the host cytoplasm. It localises to the host nucleus. Plays a major role in the induction and maintenance of cellular transformation. E6 associates with host UBE3A/E6-AP ubiquitin-protein ligase and modulates its activity. Protects host keratinocytes from apoptosis by mediating the degradation of host BAK1. May also inhibit host immune response. In Human papillomavirus type 5b, this protein is Protein E6.